Reading from the N-terminus, the 491-residue chain is Lysosomal Pro-X carboxypeptidase (491 aa).

A signal peptide spans 1–17; sequence MGCRALLLLSFLLLGAA. The propeptide occupies 18 to 43; it reads TTIPPRLKTLGSPHLSASPTPDPAVA. Asn99 is a glycosylation site (N-linked (GlcNAc...) asparagine). Residue Ser177 is the Charge relay system of the active site. The interval 192–332 is SKS domain; the sequence is HIVVGALAAS…QNIFQALSVY (141 aa). 4 cysteine pairs are disulfide-bonded: Cys213–Cys370, Cys231–Cys308, Cys262–Cys341, and Cys362–Cys392. Asn315, Asn334, and Asn343 each carry an N-linked (GlcNAc...) asparagine glycan. Asn413 carries an N-linked (GlcNAc...) asparagine glycan. Residues Asp428 and His453 each act as charge relay system in the active site.

This sequence belongs to the peptidase S28 family. Homodimer.

Its subcellular location is the lysosome. The catalysed reaction is Cleavage of a -Pro-|-Xaa bond to release a C-terminal amino acid.. Functionally, cleaves C-terminal amino acids linked to proline in peptides such as angiotensin II, III and des-Arg9-bradykinin. This cleavage occurs at acidic pH, but enzymatic activity is retained with some substrates at neutral pH. This is Lysosomal Pro-X carboxypeptidase (Prcp) from Mus musculus (Mouse).